Here is a 304-residue protein sequence, read N- to C-terminus: MERAEHIYQKLVAICGEENVLRDEPMKHHTLVRIGGKADFLVWPETYEQVVDVLRLKEEYELPFTLLGNGSNVIIRDGGLRGIVMQLKHLNRIWREGNNIIAQSGADIKAVSRFALEQHLTGLEFACGIPGSVGGAIMMNAGAYGGEVKDVLDHVKVATLTGELKTLTNEELELGYRTSLISRTHDIVLEVVFALQPGDYGQIKAKMDDLTFQRESKQPLEYPSVGSVFKRPPGYFAGKLIQDSGLQGKGFGGAEVSTKHAGFIINKNNATAADYIATIEMVRKTVKEKFGVELELEVKILGEE.

One can recognise an FAD-binding PCMH-type domain in the interval I34–G198. R177 is a catalytic residue. S227 serves as the catalytic Proton donor. The active site involves E297.

Belongs to the MurB family. FAD is required as a cofactor.

It localises to the cytoplasm. It catalyses the reaction UDP-N-acetyl-alpha-D-muramate + NADP(+) = UDP-N-acetyl-3-O-(1-carboxyvinyl)-alpha-D-glucosamine + NADPH + H(+). Its pathway is cell wall biogenesis; peptidoglycan biosynthesis. Its function is as follows. Cell wall formation. The sequence is that of UDP-N-acetylenolpyruvoylglucosamine reductase from Geobacillus thermodenitrificans (strain NG80-2).